The following is a 720-amino-acid chain: ABC transporter G family member STR2 (720 aa).

Over 1–467 (MRHANGRRGD…NFINIRRTPE (467 aa)) the chain is Cytoplasmic. The 250-residue stretch at 25–274 (LEFSNLTYTV…LGRMGRKVPK (250 aa)) folds into the ABC transporter domain. 70 to 77 (GPSGAGKS) serves as a coordination point for ATP. A disordered region spans residues 313-346 (GAHEMSIVPPSPAPSHREGRGHDRSNKRLHLKDQ). Basic and acidic residues predominate over residues 327 to 346 (SHREGRGHDRSNKRLHLKDQ). Residues 468–488 (LFLSRLVVLTVMGIMMATMFM) traverse the membrane as a helical segment. Topologically, residues 489 to 502 (HPKKNLQGITNRLS) are extracellular. A helical membrane pass occupies residues 503–523 (FFIFTVCLFFFSSNDAVPAFI). The Cytoplasmic segment spans residues 524–547 (QERFIFVRETSHNKYRASSYTIAG). The chain crosses the membrane as a helical span at residues 548–568 (LITYLPFLAVQAAVYAVIVWF). Residues 569 to 575 (ALSLRGP) are Extracellular-facing. A helical transmembrane segment spans residues 576-596 (FIYFLIVLYMSLLSTNSFVVF). At 597 to 604 (VSSVVPNY) the chain is on the cytoplasmic side. A helical transmembrane segment spans residues 605–625 (ILGYAAVIAFTALFFLFCGYF). At 626 to 693 (LNSHDMPQYW…QVESKKWEKV (68 aa)) the chain is on the extracellular side. The N-linked (GlcNAc...) asparagine glycan is linked to asparagine 681. A helical transmembrane segment spans residues 694–714 (YIMLAWAIVYRILFYIVLRFF). Over 715–720 (SKNQRT) the chain is Cytoplasmic.

This sequence belongs to the ABC transporter superfamily. ABCG family. Stunted arbuscule (STR) subfamily. In terms of assembly, heterodimerizes with STR; the resulting transporter is located in the peri-arbuscular membrane.

It localises to the cell membrane. Functionally, together with STR, required for arbuscule development in arbuscular mycorrhizal (AM) symbiosis. This is ABC transporter G family member STR2 from Petunia hybrida (Petunia).